Reading from the N-terminus, the 345-residue chain is Phosphoribosylformylglycinamidine cyclo-ligase (345 aa).

The protein belongs to the AIR synthase family.

The protein resides in the cytoplasm. It catalyses the reaction 2-formamido-N(1)-(5-O-phospho-beta-D-ribosyl)acetamidine + ATP = 5-amino-1-(5-phospho-beta-D-ribosyl)imidazole + ADP + phosphate + H(+). It participates in purine metabolism; IMP biosynthesis via de novo pathway; 5-amino-1-(5-phospho-D-ribosyl)imidazole from N(2)-formyl-N(1)-(5-phospho-D-ribosyl)glycinamide: step 2/2. This chain is Phosphoribosylformylglycinamidine cyclo-ligase, found in Pseudoalteromonas atlantica (strain T6c / ATCC BAA-1087).